The primary structure comprises 164 residues: uncharacterized protein (164 aa).

Residues Met1–Ala22 form the signal peptide. Residue Cys23 is the site of N-palmitoyl cysteine attachment. Cys23 is lipidated: S-diacylglycerol cysteine.

Its subcellular location is the cell membrane. This is an uncharacterized protein from Escherichia coli (strain K12).